The sequence spans 248 residues: Large ribosomal subunit protein uL1 (248 aa).

Belongs to the universal ribosomal protein uL1 family. In terms of assembly, part of the 50S ribosomal subunit.

Its function is as follows. Binds directly to 23S rRNA. The L1 stalk is quite mobile in the ribosome, and is involved in E site tRNA release. Protein L1 is also a translational repressor protein, it controls the translation of the L11 operon by binding to its mRNA. The chain is Large ribosomal subunit protein uL1 from Orientia tsutsugamushi (strain Boryong) (Rickettsia tsutsugamushi).